A 172-amino-acid polypeptide reads, in one-letter code: Co-chaperone protein HscB homolog (172 aa).

Residues 2-74 enclose the J domain; the sequence is NYFELFGLVE…LRRAEYLLSL (73 aa).

Belongs to the HscB family. In terms of assembly, interacts with HscA and stimulates its ATPase activity.

In terms of biological role, co-chaperone involved in the maturation of iron-sulfur cluster-containing proteins. Seems to help targeting proteins to be folded toward HscA. The polypeptide is Co-chaperone protein HscB homolog (Aeromonas hydrophila subsp. hydrophila (strain ATCC 7966 / DSM 30187 / BCRC 13018 / CCUG 14551 / JCM 1027 / KCTC 2358 / NCIMB 9240 / NCTC 8049)).